We begin with the raw amino-acid sequence, 386 residues long: Lipoyl synthase, mitochondrial (386 aa).

A disordered region spans residues 1–48 (MHGRRHLAASLTRALTQAPSRSISSTPSLLQTLDPSVPSPSPPPAAEP). Over residues 13–34 (RALTQAPSRSISSTPSLLQTLD) the composition is skewed to polar residues. A compositionally biased stretch (pro residues) spans 37–46 (VPSPSPPPAA). Cys-113, Cys-118, Cys-124, Cys-144, Cys-148, Cys-151, and Ser-360 together coordinate [4Fe-4S] cluster. The 221-residue stretch at 129–349 (ETGTATATIM…RALGVEMGFR (221 aa)) folds into the Radical SAM core domain.

Belongs to the radical SAM superfamily. Lipoyl synthase family. It depends on [4Fe-4S] cluster as a cofactor.

Its subcellular location is the mitochondrion. It carries out the reaction [[Fe-S] cluster scaffold protein carrying a second [4Fe-4S](2+) cluster] + N(6)-octanoyl-L-lysyl-[protein] + 2 oxidized [2Fe-2S]-[ferredoxin] + 2 S-adenosyl-L-methionine + 4 H(+) = [[Fe-S] cluster scaffold protein] + N(6)-[(R)-dihydrolipoyl]-L-lysyl-[protein] + 4 Fe(3+) + 2 hydrogen sulfide + 2 5'-deoxyadenosine + 2 L-methionine + 2 reduced [2Fe-2S]-[ferredoxin]. The protein operates within protein modification; protein lipoylation via endogenous pathway; protein N(6)-(lipoyl)lysine from octanoyl-[acyl-carrier-protein]: step 2/2. Its function is as follows. Catalyzes the radical-mediated insertion of two sulfur atoms into the C-6 and C-8 positions of the octanoyl moiety bound to the lipoyl domains of lipoate-dependent enzymes, thereby converting the octanoylated domains into lipoylated derivatives. This is Lipoyl synthase, mitochondrial from Sorghum bicolor (Sorghum).